Reading from the N-terminus, the 305-residue chain is tRNA dimethylallyltransferase (305 aa).

9–16 (GPTGAGKT) provides a ligand contact to ATP. Residue 11-16 (TGAGKT) coordinates substrate. 2 interaction with substrate tRNA regions span residues 34–37 (DSRQ) and 158–162 (QRIVR).

It belongs to the IPP transferase family. Monomer. Mg(2+) serves as cofactor.

The catalysed reaction is adenosine(37) in tRNA + dimethylallyl diphosphate = N(6)-dimethylallyladenosine(37) in tRNA + diphosphate. In terms of biological role, catalyzes the transfer of a dimethylallyl group onto the adenine at position 37 in tRNAs that read codons beginning with uridine, leading to the formation of N6-(dimethylallyl)adenosine (i(6)A). This chain is tRNA dimethylallyltransferase, found in Oleidesulfovibrio alaskensis (strain ATCC BAA-1058 / DSM 17464 / G20) (Desulfovibrio alaskensis).